Consider the following 239-residue polypeptide: Uridylate kinase (239 aa).

Residue 13–16 (KLSG) coordinates ATP. Gly-55 contacts UMP. Residues Gly-56 and Arg-60 each contribute to the ATP site. UMP-binding positions include Asp-75 and 136 to 143 (TGNPFFTT). Residues Thr-163, Asn-164, Tyr-169, and Asp-172 each coordinate ATP.

This sequence belongs to the UMP kinase family. In terms of assembly, homohexamer.

The protein resides in the cytoplasm. It catalyses the reaction UMP + ATP = UDP + ADP. Its pathway is pyrimidine metabolism; CTP biosynthesis via de novo pathway; UDP from UMP (UMPK route): step 1/1. With respect to regulation, inhibited by UTP. In terms of biological role, catalyzes the reversible phosphorylation of UMP to UDP. The chain is Uridylate kinase from Neisseria gonorrhoeae (strain ATCC 700825 / FA 1090).